Reading from the N-terminus, the 747-residue chain is MSKLKSSESVRVVVRCRPMNGKEKAASYDKVVDVDVKLGQVSVKNPKGTSHEMPKTFTFDAVYDWNAKQFELYDETFRPLVDSVLQGFNGTIFAYGQTGTGKTYTMEGVRGDPEKRGVIPNSFDHIFTHISRSQNQQYLVRASYLEIYQEEIRDLLSKDQTKRLELKERPDTGVYVKDLSSFVTKSVKEIEHVMNVGNQNRSVGATNMNEHSSRSHAIFVITIECSEVGLDGENHIRVGKLNLVDLAGSERQAKTGAQGERLKEATKINLSLSALGNVISALVDGKSTHIPYRDSKLTRLLQDSLGGNAKTVMVANVGPASYNVEETLTTLRYANRAKNIKNKPRVNEDPKDALLREFQEEIARLKAQLEKRSIGRRKRREKRREGGGSGGGGEEEEEEGEEGEEDGDDKDDYWREQQEKLEIEKRAIVEDHSLVAEEKMRLLKEKEKKMEDLRREKDAAEMLGAKIKAMESKLLVGGKNIVDHTNEQQKILEQKRQEIAEQKRREREIQQQMESRDEETLELKETYTSLQQEVDIKTKKLKKLFSKLQAVKAEIHDLQEEHIKERQELEQTQNELTRELKLKHLIIENFIPLEEKNKIMNRSFFDDEEDHWKLHPITRLENQQMMKRPVSAVGYKRPLSQHARMSMMIRPEPRYRAENIMLLELDMPSRTTRDYEGPAISPKVQAALDAALQDEDEIQVDASSFESTASRKPKARPKSGRKSGSSSSSSGNPASQFYPQSRGLVPK.

Methionine 1 carries the post-translational modification N-acetylmethionine. Serine 2 is modified (N-acetylserine; in Kinesin-like protein KIF3B, N-terminally processed). In terms of domain architecture, Kinesin motor spans 9–340 (SVRVVVRCRP…LRYANRAKNI (332 aa)). 96–103 (GQTGTGKT) contacts ATP. Residues 346–579 (VNEDPKDALL…EQTQNELTRE (234 aa)) adopt a coiled-coil conformation. 2 disordered regions span residues 374–412 (IGRR…DKDD) and 698–747 (IQVD…LVPK). A compositionally biased stretch (acidic residues) spans 393–411 (GEEEEEEGEEGEEDGDDKD). The segment at 580 to 747 (LKLKHLIIEN…YPQSRGLVPK (168 aa)) is globular. Residues 701–710 (DASSFESTAS) are compositionally biased toward polar residues. Over residues 711 to 721 (RKPKARPKSGR) the composition is skewed to basic residues. Residues 722–735 (KSGSSSSSSGNPAS) are compositionally biased toward low complexity.

The protein belongs to the TRAFAC class myosin-kinesin ATPase superfamily. Kinesin family. Kinesin II subfamily. As to quaternary structure, heterodimer of KIF3A and KIF3B. KIF3A/KIF3B heterodimer interacts with KIFAP3 forming a heterotrimeric (KIF3A/KIF3B/KIFAP3) complex. Interacts with the SMC3 subunit of the cohesin complex. Interacts directly with IFT20. Interacts with FLCN.

The protein localises to the cytoplasm. Its subcellular location is the cytoskeleton. It localises to the cell projection. The protein resides in the cilium. It is found in the dendritic spine. In terms of biological role, microtubule-based molecular motor that transport intracellular cargos, such as vesicles, organelles and protein complexes. Uses ATP hydrolysis to generate force to bind and move along the microtubule. Plays a role in cilia formation. Involved in photoreceptor integrity and opsin trafficking in rod photoreceptors. Transports vesicles containing N-methyl-D-aspartate (NMDA) receptor subunit GRIN2A into neuronal dendrites. In Mus musculus (Mouse), this protein is Kinesin-like protein KIF3B.